Consider the following 409-residue polypeptide: Glycosyltransferase GtfC (409 aa).

Belongs to the glycosyltransferase 28 family.

The enzyme catalyses dTDP-beta-L-vancosamine + devancoaminyl-vancomycin = epivancomycin + dTDP + H(+). The catalysed reaction is chloroorienticin B + dTDP-beta-L-vancosamine = chloroeremomycin + dTDP + H(+). It participates in antibiotic biosynthesis; vancomycin biosynthesis. Functionally, catalyzes the attachment of dTDP-L-4-epi-vancosamine to chloroorienticin B to form chloroeremomycin in the biosynthesis of glycopeptide antibiotic chloroeremomycin, a member of the vancomycin group of antibiotics. Also able to use dTDP-L-4-epi-vancosamine and devancoaminyl-vancomycin (DVV) to create epivancomycin. Acts downstream of GtfA. The sequence is that of Glycosyltransferase GtfC (gtfC) from Amycolatopsis orientalis (Nocardia orientalis).